Consider the following 79-residue polypeptide: DNA-directed RNA polymerase subunit omega (79 aa).

This sequence belongs to the RNA polymerase subunit omega family. The RNAP catalytic core consists of 2 alpha, 1 beta, 1 beta' and 1 omega subunit. When a sigma factor is associated with the core the holoenzyme is formed, which can initiate transcription.

It carries out the reaction RNA(n) + a ribonucleoside 5'-triphosphate = RNA(n+1) + diphosphate. Its function is as follows. Promotes RNA polymerase assembly. Latches the N- and C-terminal regions of the beta' subunit thereby facilitating its interaction with the beta and alpha subunits. The chain is DNA-directed RNA polymerase subunit omega from Kosmotoga olearia (strain ATCC BAA-1733 / DSM 21960 / TBF 19.5.1).